The primary structure comprises 187 residues: Putative lipoprotein LppJ (187 aa).

Residues 1 to 28 (MPHSTADRRLRLTRQALLAAAVAPLLAG) form the signal peptide. A lipid anchor (N-palmitoyl cysteine) is attached at cysteine 29. The S-diacylglycerol cysteine moiety is linked to residue cysteine 29.

Its subcellular location is the cell membrane. The polypeptide is Putative lipoprotein LppJ (lppJ) (Mycobacterium bovis (strain ATCC BAA-935 / AF2122/97)).